A 505-amino-acid polypeptide reads, in one-letter code: GMP synthase [glutamine-hydrolyzing] (505 aa).

The region spanning 2 to 190 (SVVILDFGSQ…FLEICGVARD (189 aa)) is the Glutamine amidotransferase type-1 domain. Cys-79 serves as the catalytic Nucleophile. Active-site residues include His-165 and Glu-167. One can recognise a GMPS ATP-PPase domain in the interval 191–380 (WNAEHIVDEL…LGLPDAIRMR (190 aa)). ATP is bound at residue 218 to 224 (SGGVDSS).

As to quaternary structure, homodimer.

It catalyses the reaction XMP + L-glutamine + ATP + H2O = GMP + L-glutamate + AMP + diphosphate + 2 H(+). The protein operates within purine metabolism; GMP biosynthesis; GMP from XMP (L-Gln route): step 1/1. In terms of biological role, catalyzes the synthesis of GMP from XMP. This is GMP synthase [glutamine-hydrolyzing] from Deinococcus geothermalis (strain DSM 11300 / CIP 105573 / AG-3a).